A 389-amino-acid chain; its full sequence is Anhydro-N-acetylmuramic acid kinase (389 aa).

ATP is bound at residue 11–18; that stretch reads GTSLDGVD.

This sequence belongs to the anhydro-N-acetylmuramic acid kinase family.

It catalyses the reaction 1,6-anhydro-N-acetyl-beta-muramate + ATP + H2O = N-acetyl-D-muramate 6-phosphate + ADP + H(+). It participates in amino-sugar metabolism; 1,6-anhydro-N-acetylmuramate degradation. The protein operates within cell wall biogenesis; peptidoglycan recycling. Functionally, catalyzes the specific phosphorylation of 1,6-anhydro-N-acetylmuramic acid (anhMurNAc) with the simultaneous cleavage of the 1,6-anhydro ring, generating MurNAc-6-P. Is required for the utilization of anhMurNAc either imported from the medium or derived from its own cell wall murein, and thus plays a role in cell wall recycling. This is Anhydro-N-acetylmuramic acid kinase from Albidiferax ferrireducens (strain ATCC BAA-621 / DSM 15236 / T118) (Rhodoferax ferrireducens).